A 175-amino-acid chain; its full sequence is Ribosome maturation factor RimM (175 aa).

The PRC barrel domain occupies 96-175 (EGDYYWHDLI…TIEVDWDAGF (80 aa)).

The protein belongs to the RimM family. In terms of assembly, binds ribosomal protein uS19.

It is found in the cytoplasm. Its function is as follows. An accessory protein needed during the final step in the assembly of 30S ribosomal subunit, possibly for assembly of the head region. Essential for efficient processing of 16S rRNA. May be needed both before and after RbfA during the maturation of 16S rRNA. It has affinity for free ribosomal 30S subunits but not for 70S ribosomes. The sequence is that of Ribosome maturation factor RimM from Actinobacillus succinogenes (strain ATCC 55618 / DSM 22257 / CCUG 43843 / 130Z).